The sequence spans 215 residues: Ubiquitin-conjugating enzyme E2 S (215 aa).

The 147-residue stretch at 9–155 (DVIKRVVKEL…AKLFTSIHAS (147 aa)) folds into the UBC core domain. Cys93 (glycyl thioester intermediate) is an active-site residue. The segment at 159 to 215 (IDSNNNNENSTTTPTTTTTATTPSTNTASISSPVKKKTETTNSTTTKVQPKKSLKRL) is disordered. Positions 161–190 (SNNNNENSTTTPTTTTTATTPSTNTASISS) are enriched in low complexity.

The protein belongs to the ubiquitin-conjugating enzyme family.

The enzyme catalyses S-ubiquitinyl-[E1 ubiquitin-activating enzyme]-L-cysteine + [E2 ubiquitin-conjugating enzyme]-L-cysteine = [E1 ubiquitin-activating enzyme]-L-cysteine + S-ubiquitinyl-[E2 ubiquitin-conjugating enzyme]-L-cysteine.. It participates in protein modification; protein ubiquitination. In terms of biological role, catalyzes the covalent attachment of ubiquitin to other proteins. Acts as an essential factor of the anaphase promoting complex/cyclosome (APC/C), a cell cycle-regulated ubiquitin ligase that controls progression through mitosis. Acts by specifically elongating polyubiquitin chains initiated by the E2 enzyme ubch10 on APC/C substrates, enhancing the degradation of APC/C substrates by the proteasome and promoting mitotic exit. This is Ubiquitin-conjugating enzyme E2 S (ube2s) from Dictyostelium discoideum (Social amoeba).